The chain runs to 947 residues: Protein NLP8 (947 aa).

3 disordered regions span residues 114–135, 509–533, and 550–591; these read RSSA…ELSG, STKK…TTSS, and SMFS…EKNV. Residues 126–135 show a composition bias toward basic and acidic residues; that stretch reads RSSDSDELSG. Composition is skewed to polar residues over residues 522-533 and 550-572; these read SDMSNFPQTTSS and SMFS…TLEQ. Over residues 573 to 587 the composition is skewed to basic and acidic residues; it reads DVSKARTPEKKKSTT. The 95-residue stretch at 577-671 folds into the RWP-RK domain; sequence ARTPEKKKST…LDSVQGVEGG (95 aa). The stretch at 646–666 forms a coiled coil; the sequence is RKINKVNRSLRKIQTVLDSVQ. Residues 805 to 815 are compositionally biased toward low complexity; that stretch reads SCSISDSSNGS. The interval 805–828 is disordered; that stretch reads SCSISDSSNGSGAVLRGSSSTSME. The region spanning 847–929 is the PB1 domain; it reads TLIVKASYRE…HSVKFLVRDL (83 aa).

Its subcellular location is the nucleus. In terms of biological role, probable transcription factor. The protein is Protein NLP8 (NLP8) of Arabidopsis thaliana (Mouse-ear cress).